The chain runs to 219 residues: Claudin-3 (219 aa).

Residues 1 to 8 lie on the Cytoplasmic side of the membrane; sequence MSMGLEIT. A helical transmembrane segment spans residues 9 to 29; it reads GTSLAVLGWLCTIVCCALPMW. Residues 30–80 lie on the Extracellular side of the membrane; sequence RVSAFIGSSIITAQITWEGLWMNCVVQSTGQMQCKMYDSLLALPQDLQAAR. Residues 81–101 form a helical membrane-spanning segment; it reads ALIVVSILLAAFGLLVALVGA. The Cytoplasmic portion of the chain corresponds to 102–115; that stretch reads QCTNCVQDETAKAK. The helical transmembrane segment at 116-136 threads the bilayer; it reads ITIVAGVLFLLAALLTLVPVS. Topologically, residues 137-159 are extracellular; sequence WSANTIIRDFYNPLVPEAQKREM. Residues 160-180 traverse the membrane as a helical segment; it reads GAGLYVGWAAAALQLLGGALL. The Cytoplasmic portion of the chain corresponds to 181 to 219; sequence CCSCPPRDKYAPTKILYSAPRSTGPGTGTGTAYDRKDYV. Y197 bears the Phosphotyrosine mark. At S198 the chain carries Phosphoserine. Residues 218–219 are interactions with TJP1, TJP2 and TJP3; it reads YV.

The protein belongs to the claudin family. As to quaternary structure, can form homo- and heteropolymers with other CLDN. Homopolymers interact with CLDN1 and CLDN2 homopolymers. Interacts in cis (within the same plasma membrane) with CLDN19. Directly interacts with TJP1/ZO-1, TJP2/ZO-2 and TJP3/ZO-3. (Microbial infection) Interacts with Clostridium perfringens enterotoxin CPE; the interaction may disrupt claudin assembly in tight junctions. As to expression, expressed in the lung. Expressed at high levels in the liver and at lower levels, in kidney and testis.

The protein localises to the cell junction. It is found in the tight junction. It localises to the cell membrane. In terms of biological role, plays a major role in tight junction-specific obliteration of the intercellular space, through calcium-independent cell-adhesion activity. In Mus musculus (Mouse), this protein is Claudin-3 (Cldn3).